The chain runs to 421 residues: Atrochrysone carboxyl ACP thioesterase (421 aa).

Residues histidine 207, histidine 209, aspartate 211, and histidine 212 each coordinate Zn(2+). Catalysis depends on aspartate 211, which acts as the Proton donor/acceptor.

This sequence belongs to the metallo-beta-lactamase superfamily. Requires Zn(2+) as cofactor. As to expression, specifically expressed in conidia.

The enzyme catalyses atrochrysone carboxyl-[ACP] + H2O = atrochrysone carboxylate + holo-[ACP] + H(+). The protein operates within secondary metabolite biosynthesis. In terms of biological role, atrochrysone carboxyl ACP thioesterase; part of the gene cluster that mediates the biosynthesis of trypacidin, a mycotoxin with antiprotozoal activity and that plays a role in the infection process. The pathway begins with the synthesis of atrochrysone thioester by the polyketide synthase (PKS) tpcC. The atrochrysone carboxyl ACP thioesterase tpcB then breaks the thioester bond and releases the atrochrysone carboxylic acid from tpcC. The decarboxylase tpcK converts atrochrysone carboxylic acid to atrochrysone which is further reduced into emodin anthrone. The next step is performed by the emodin anthrone oxygenase tpcL that catalyzes the oxidation of emodin anthrone to emodin. Emodin O-methyltransferase encoded by tpcA catalyzes methylation of the 8-hydroxy group of emodin to form questin. Ring cleavage of questin by questin oxidase tpcI leads to desmethylsulochrin via several intermediates including questin epoxide. Another methylation step catalyzed by tpcM leads to the formation of sulochrin which is further converted to monomethylsulfochrin by tpcH. Finally, the tpcJ catalyzes the conversion of monomethylsulfochrin to trypacidin. Trypacidin is toxic for human pulmonary and bronchial epithelial cells by initiating the intracellular formation of nitric oxide (NO) and hydrogen peroxide (H(2)O(2)), thus triggering host necrotic cell death. The trypacidin pathway is also able to produce endocrocin via a distinct route from the endocrocin Enc pathway. This chain is Atrochrysone carboxyl ACP thioesterase, found in Aspergillus fumigatus (strain ATCC MYA-4609 / CBS 101355 / FGSC A1100 / Af293) (Neosartorya fumigata).